Here is a 155-residue protein sequence, read N- to C-terminus: Aspartate carbamoyltransferase regulatory chain (155 aa).

Zn(2+) contacts are provided by cysteine 113, cysteine 118, cysteine 139, and cysteine 142.

Belongs to the PyrI family. In terms of assembly, contains catalytic and regulatory chains. Zn(2+) serves as cofactor.

Functionally, involved in allosteric regulation of aspartate carbamoyltransferase. This Methanosphaerula palustris (strain ATCC BAA-1556 / DSM 19958 / E1-9c) protein is Aspartate carbamoyltransferase regulatory chain.